The sequence spans 472 residues: Glycine--tRNA ligase (472 aa).

Substrate is bound by residues R109 and E174. ATP contacts are provided by residues R206 to E208, F216 to F221, E293 to L294, and G337 to R340. F221 to E225 contributes to the substrate binding site. Residue E333–G337 participates in substrate binding.

The protein belongs to the class-II aminoacyl-tRNA synthetase family. As to quaternary structure, homodimer.

Its subcellular location is the cytoplasm. The catalysed reaction is tRNA(Gly) + glycine + ATP = glycyl-tRNA(Gly) + AMP + diphosphate. Its function is as follows. Catalyzes the attachment of glycine to tRNA(Gly). The sequence is that of Glycine--tRNA ligase from Cutibacterium acnes (strain DSM 16379 / KPA171202) (Propionibacterium acnes).